A 153-amino-acid chain; its full sequence is 6,7-dimethyl-8-ribityllumazine synthase (153 aa).

Residues phenylalanine 22, 56 to 58, and 80 to 82 each bind 5-amino-6-(D-ribitylamino)uracil; these read AFE and AVI. 85–86 lines the (2S)-2-hydroxy-3-oxobutyl phosphate pocket; that stretch reads ST. The active-site Proton donor is histidine 88. Residue phenylalanine 113 coordinates 5-amino-6-(D-ribitylamino)uracil. A (2S)-2-hydroxy-3-oxobutyl phosphate-binding site is contributed by arginine 127.

It belongs to the DMRL synthase family.

The enzyme catalyses (2S)-2-hydroxy-3-oxobutyl phosphate + 5-amino-6-(D-ribitylamino)uracil = 6,7-dimethyl-8-(1-D-ribityl)lumazine + phosphate + 2 H2O + H(+). It functions in the pathway cofactor biosynthesis; riboflavin biosynthesis; riboflavin from 2-hydroxy-3-oxobutyl phosphate and 5-amino-6-(D-ribitylamino)uracil: step 1/2. Catalyzes the formation of 6,7-dimethyl-8-ribityllumazine by condensation of 5-amino-6-(D-ribitylamino)uracil with 3,4-dihydroxy-2-butanone 4-phosphate. This is the penultimate step in the biosynthesis of riboflavin. This is 6,7-dimethyl-8-ribityllumazine synthase from Clostridium novyi (strain NT).